Consider the following 521-residue polypeptide: Citrinin biosynthesis cluster MFS transporter ctnC (521 aa).

The interval 1–29 (MKEEIDAPVSTDASGTDLENARDQPSGEK) is disordered. 8 consecutive transmembrane segments (helical) span residues 58–78 (SLIT…SSVF), 95–115 (VMTL…LVWG), 124–144 (LKPL…VAVA), 155–175 (FFLG…LADF), 182–202 (AIAI…GPIM), 237–257 (WTAW…FLTL), 313–333 (ILVC…LFFV), and 349–369 (GIAA…CLLV). An N-linked (GlcNAc...) asparagine glycan is attached at Asn-383. 4 consecutive transmembrane segments (helical) span residues 392 to 412 (LPPM…FGWT), 417 to 437 (ISWA…LMIW), 465 to 485 (AVSA…GVDW), and 489 to 509 (LLGF…FYGA).

It belongs to the major facilitator superfamily. CAR1 family.

The protein resides in the membrane. MFS transporter; part of the gene cluster that mediates the biosynthesis the mycotoxin citrinin, a hepato-nephrotoxic compound to humans due to inhibition of respiration complex III. This Monascus purpureus (Red mold) protein is Citrinin biosynthesis cluster MFS transporter ctnC (ctnC).